A 930-amino-acid chain; its full sequence is RNA-binding protein 10 (930 aa).

Composition is skewed to basic and acidic residues over residues 1–14 and 21–45; these read MEYE…DRTG and RSQD…RSYP. Positions 1-127 are disordered; the sequence is MEYERRGGRG…EEDEEEEEKA (127 aa). The residue at position 2 (glutamate 2) is an N-acetylserine. Arginine 30, serine 61, and serine 89 each carry phosphoserine. The span at 59–70 shows a compositional bias: acidic residues; the sequence is DSSEEQSAEDSY. The span at 80-89 shows a compositional bias: basic residues; it reads RRRRRRHRHS. Residues 98–111 show a composition bias toward basic and acidic residues; sequence RDGDYRDQDYRTEQ. Residues 112-125 show a composition bias toward acidic residues; it reads GEEEEEEEDEEEEE. The region spanning 129–209 is the RRM 1 domain; the sequence is NIVMLRMLPQ…QKVSMHYSDP (81 aa). A RanBP2-type zinc finger spans residues 212 to 242; the sequence is KINEDWLCNKCGVQNFKRREKCFKCGVPKSE. One can recognise an RRM 2 domain in the interval 300–384; sequence DTIILRNLNP…KTINVEFAKG (85 aa). At lysine 383 the chain carries N6-acetyllysine. Disordered regions lie at residues 466-524, 537-569, 620-685, and 700-753; these read PGIT…AANS, SELQ…VPDV, EQSA…DERR, and KGAL…EEKL. Polar residues predominate over residues 508–524; sequence YQQSAEASSSQGTAANS. Over residues 541–557 the composition is skewed to low complexity; the sequence is SPTHPSSALPPATSPTA. Composition is skewed to basic and acidic residues over residues 623–639, 653–669, and 700–709; these read ADGH…GKEK, KDME…KENF, and KGALAERQHT. Residues serine 718, serine 723, serine 733, serine 736, and serine 738 each carry the phosphoserine modification. The span at 743–753 shows a compositional bias: basic and acidic residues; sequence ERGGPEREEKL. The C2H2-type; atypical zinc finger occupies 759-784; sequence LACLLCRRQFPSKEALIRHQQLSGLH. Phosphoserine occurs at positions 781 and 797. The span at 815–826 shows a compositional bias: basic and acidic residues; the sequence is RDRAAERREKYG. Residues 815-861 form a disordered region; that stretch reads RDRAAERREKYGIPEPPEPKRRKYGGISTASVDFEQPTRDGLGSDNI. Phosphoserine is present on serine 845. The G-patch domain occupies 858–904; that stretch reads SDNIGSRMLQAMGWKEGSGLGRKKQGIVTPIEAQTRVRGSGLGARGS. Omega-N-methylarginine is present on arginine 902.

As to quaternary structure, associates with the spliceosome. Component of a large chromatin remodeling complex, at least composed of MYSM1, PCAF, RBM10 and KIF11/TRIP5.

Its subcellular location is the nucleus. Its function is as follows. Binds to ssRNA containing the consensus sequence 5'-AGGUAA-3'. May be involved in post-transcriptional processing, most probably in mRNA splicing. Binds to RNA homopolymers, with a preference for poly(G) and poly(U) and little for poly(A). May bind to specific miRNA hairpins. The sequence is that of RNA-binding protein 10 from Homo sapiens (Human).